The sequence spans 344 residues: Aspartate-semialdehyde dehydrogenase (344 aa).

Residues 10-13 (TGQV) and 38-39 (RS) each bind NADP(+). Residue arginine 101 coordinates phosphate. The Acyl-thioester intermediate role is filled by cysteine 131. Glutamine 158 contacts substrate. 161 to 162 (SG) is a binding site for NADP(+). Residue lysine 228 participates in phosphate binding. Substrate is bound at residue arginine 250. Histidine 257 (proton acceptor) is an active-site residue. An NADP(+)-binding site is contributed by asparagine 326.

This sequence belongs to the aspartate-semialdehyde dehydrogenase family. Homodimer.

The catalysed reaction is L-aspartate 4-semialdehyde + phosphate + NADP(+) = 4-phospho-L-aspartate + NADPH + H(+). The protein operates within amino-acid biosynthesis; L-lysine biosynthesis via DAP pathway; (S)-tetrahydrodipicolinate from L-aspartate: step 2/4. Its pathway is amino-acid biosynthesis; L-methionine biosynthesis via de novo pathway; L-homoserine from L-aspartate: step 2/3. It participates in amino-acid biosynthesis; L-threonine biosynthesis; L-threonine from L-aspartate: step 2/5. Catalyzes the NADPH-dependent formation of L-aspartate-semialdehyde (L-ASA) by the reductive dephosphorylation of L-aspartyl-4-phosphate. The polypeptide is Aspartate-semialdehyde dehydrogenase (Corynebacterium glutamicum (strain ATCC 13032 / DSM 20300 / JCM 1318 / BCRC 11384 / CCUG 27702 / LMG 3730 / NBRC 12168 / NCIMB 10025 / NRRL B-2784 / 534)).